The primary structure comprises 317 residues: Aspartate carbamoyltransferase catalytic subunit (317 aa).

Positions 64 and 65 each coordinate carbamoyl phosphate. Lys92 lines the L-aspartate pocket. Positions 114, 144, and 147 each coordinate carbamoyl phosphate. L-aspartate is bound by residues Arg177 and Arg232. Residues Gly273 and Pro274 each coordinate carbamoyl phosphate.

Belongs to the aspartate/ornithine carbamoyltransferase superfamily. ATCase family. As to quaternary structure, heterododecamer (2C3:3R2) of six catalytic PyrB chains organized as two trimers (C3), and six regulatory PyrI chains organized as three dimers (R2).

It carries out the reaction carbamoyl phosphate + L-aspartate = N-carbamoyl-L-aspartate + phosphate + H(+). It functions in the pathway pyrimidine metabolism; UMP biosynthesis via de novo pathway; (S)-dihydroorotate from bicarbonate: step 2/3. Catalyzes the condensation of carbamoyl phosphate and aspartate to form carbamoyl aspartate and inorganic phosphate, the committed step in the de novo pyrimidine nucleotide biosynthesis pathway. This Thiobacillus denitrificans (strain ATCC 25259 / T1) protein is Aspartate carbamoyltransferase catalytic subunit.